We begin with the raw amino-acid sequence, 473 residues long: Major myo-inositol transporter IolT (473 aa).

12 consecutive transmembrane segments (helical) span residues 14–34, 49–69, 83–103, 111–131, 146–166, 172–192, 256–276, 295–315, 325–345, 350–370, 389–409, and 411–431; these read IILV…VLNG, AFTE…GAVF, ILFL…APNV, FVLG…LAEM, LMIV…GTTM, VWRF…FGMI, IVFI…NSIM, IGNI…IWLL, MTGL…SLVL, ALPY…QGAI, LGMG…SFTF, and ILLA…LGIC.

This sequence belongs to the major facilitator superfamily. Sugar transporter (TC 2.A.1.1) family.

The protein localises to the cell membrane. The protein operates within polyol metabolism; myo-inositol degradation into acetyl-CoA. Major myo-inositol uptake transporter. This chain is Major myo-inositol transporter IolT (iolT), found in Bacillus subtilis (strain 168).